A 446-amino-acid chain; its full sequence is tRNA-2-methylthio-N(6)-dimethylallyladenosine synthase (446 aa).

Residues 3-120 (KKIYIKTFGC…LPEMLKQRRS (118 aa)) enclose the MTTase N-terminal domain. Cysteine 12, cysteine 49, cysteine 83, cysteine 157, cysteine 161, and cysteine 164 together coordinate [4Fe-4S] cluster. Positions 143 to 375 (KVEGATAFVS…QAVIDQNTRR (233 aa)) constitute a Radical SAM core domain. One can recognise a TRAM domain in the interval 378 to 444 (DEMVGSVQRI…AYTLRGEIVV (67 aa)).

It belongs to the methylthiotransferase family. MiaB subfamily. Monomer. [4Fe-4S] cluster is required as a cofactor.

The protein localises to the cytoplasm. The catalysed reaction is N(6)-dimethylallyladenosine(37) in tRNA + (sulfur carrier)-SH + AH2 + 2 S-adenosyl-L-methionine = 2-methylsulfanyl-N(6)-dimethylallyladenosine(37) in tRNA + (sulfur carrier)-H + 5'-deoxyadenosine + L-methionine + A + S-adenosyl-L-homocysteine + 2 H(+). Functionally, catalyzes the methylthiolation of N6-(dimethylallyl)adenosine (i(6)A), leading to the formation of 2-methylthio-N6-(dimethylallyl)adenosine (ms(2)i(6)A) at position 37 in tRNAs that read codons beginning with uridine. This Herminiimonas arsenicoxydans protein is tRNA-2-methylthio-N(6)-dimethylallyladenosine synthase.